Here is a 275-residue protein sequence, read N- to C-terminus: Large ribosomal subunit protein uL2 (275 aa).

Positions 28–38 are enriched in basic and acidic residues; sequence EPYAPLLDKKS. Disordered stretches follow at residues 28–55 and 224–258; these read EPYA…RHVG and AMNP…GYKT.

The protein belongs to the universal ribosomal protein uL2 family. In terms of assembly, part of the 50S ribosomal subunit. Forms a bridge to the 30S subunit in the 70S ribosome.

In terms of biological role, one of the primary rRNA binding proteins. Required for association of the 30S and 50S subunits to form the 70S ribosome, for tRNA binding and peptide bond formation. It has been suggested to have peptidyltransferase activity; this is somewhat controversial. Makes several contacts with the 16S rRNA in the 70S ribosome. The chain is Large ribosomal subunit protein uL2 from Cellvibrio japonicus (strain Ueda107) (Pseudomonas fluorescens subsp. cellulosa).